Here is a 330-residue protein sequence, read N- to C-terminus: tRNA N6-adenosine threonylcarbamoyltransferase (330 aa).

The Fe cation site is built by histidine 110 and histidine 114. Substrate is bound by residues 133–137, aspartate 166, glycine 179, aspartate 183, and asparagine 271; that span reads MVSGG. Aspartate 299 is a Fe cation binding site.

It belongs to the KAE1 / TsaD family. The cofactor is Fe(2+).

The protein localises to the cytoplasm. The catalysed reaction is L-threonylcarbamoyladenylate + adenosine(37) in tRNA = N(6)-L-threonylcarbamoyladenosine(37) in tRNA + AMP + H(+). In terms of biological role, required for the formation of a threonylcarbamoyl group on adenosine at position 37 (t(6)A37) in tRNAs that read codons beginning with adenine. Is involved in the transfer of the threonylcarbamoyl moiety of threonylcarbamoyl-AMP (TC-AMP) to the N6 group of A37, together with TsaE and TsaB. TsaD likely plays a direct catalytic role in this reaction. The protein is tRNA N6-adenosine threonylcarbamoyltransferase of Thermosipho africanus (strain TCF52B).